Reading from the N-terminus, the 195-residue chain is MSSIKLIVGLANPGAEYAATRHNAGAWFVDRLAESYRQSLKEESKFFGYTSRLNLAGQDVRLLVPTTFMNLSGKAVAAMATFYRIQPDEILVAHDELDLLPGIAKLKLGGGHGGHNGLKDIISKLGNNPNFHRLRIGIGHPGDKSKVTGFVLGKPPMSEQTLIDEAIDEAVRCTEILMKEDMIKAMNRLHAFKAA.

TRNA is bound at residue Y17. The Proton acceptor role is filled by H22. 3 residues coordinate tRNA: F68, N70, and N116.

This sequence belongs to the PTH family. In terms of assembly, monomer.

It is found in the cytoplasm. It catalyses the reaction an N-acyl-L-alpha-aminoacyl-tRNA + H2O = an N-acyl-L-amino acid + a tRNA + H(+). Hydrolyzes ribosome-free peptidyl-tRNAs (with 1 or more amino acids incorporated), which drop off the ribosome during protein synthesis, or as a result of ribosome stalling. Its function is as follows. Catalyzes the release of premature peptidyl moieties from peptidyl-tRNA molecules trapped in stalled 50S ribosomal subunits, and thus maintains levels of free tRNAs and 50S ribosomes. The polypeptide is Peptidyl-tRNA hydrolase (Pectobacterium atrosepticum (strain SCRI 1043 / ATCC BAA-672) (Erwinia carotovora subsp. atroseptica)).